Consider the following 261-residue polypeptide: Cytochrome c oxidase subunit 3 (261 aa).

Over 1–15 (MTNQLHPFHMTNPSP) the chain is Mitochondrial matrix. The helical transmembrane segment at 16–34 (WPLTGATAALLMTSGLIMW) threads the bilayer. The Mitochondrial intermembrane portion of the chain corresponds to 35–40 (FHYNSS). A helical membrane pass occupies residues 41 to 66 (QLIMLGLLIMLLTLTQWWRDIVREST). Topologically, residues 67–72 (FQGHHT) are mitochondrial matrix. Residues 73-105 (PSVQNNLRYGMILFITSEILFFTGFFWAFYHSS) form a helical membrane-spanning segment. At 106-128 (LSPTAELGNIWPPTGITPLNPFE) the chain is on the mitochondrial intermembrane side. The chain crosses the membrane as a helical span at residues 129 to 152 (VPLLNTAVLLASGVTITWAHHSLM). Topologically, residues 153–155 (EGN) are mitochondrial matrix. Residues 156 to 183 (RPQTLQALTLTIILGTYFTILQAMEYFE) traverse the membrane as a helical segment. Residues 184 to 190 (ASFTIAD) are Mitochondrial intermembrane-facing. A helical transmembrane segment spans residues 191–223 (SIYGSTFFVATGFHGLHVIIGSTFLIVCLMRQL). The Mitochondrial matrix portion of the chain corresponds to 224-232 (KYHFTSHHH). Residues 233–256 (FGFEAAAWYWHFVDVIWLFLYLSI) form a helical membrane-spanning segment. Over 257–261 (YWWGS) the chain is Mitochondrial intermembrane.

This sequence belongs to the cytochrome c oxidase subunit 3 family. As to quaternary structure, component of the cytochrome c oxidase (complex IV, CIV), a multisubunit enzyme composed of 14 subunits. The complex is composed of a catalytic core of 3 subunits MT-CO1, MT-CO2 and MT-CO3, encoded in the mitochondrial DNA, and 11 supernumerary subunits COX4I, COX5A, COX5B, COX6A, COX6B, COX6C, COX7A, COX7B, COX7C, COX8 and NDUFA4, which are encoded in the nuclear genome. The complex exists as a monomer or a dimer and forms supercomplexes (SCs) in the inner mitochondrial membrane with NADH-ubiquinone oxidoreductase (complex I, CI) and ubiquinol-cytochrome c oxidoreductase (cytochrome b-c1 complex, complex III, CIII), resulting in different assemblies (supercomplex SCI(1)III(2)IV(1) and megacomplex MCI(2)III(2)IV(2)).

Its subcellular location is the mitochondrion inner membrane. The catalysed reaction is 4 Fe(II)-[cytochrome c] + O2 + 8 H(+)(in) = 4 Fe(III)-[cytochrome c] + 2 H2O + 4 H(+)(out). Its function is as follows. Component of the cytochrome c oxidase, the last enzyme in the mitochondrial electron transport chain which drives oxidative phosphorylation. The respiratory chain contains 3 multisubunit complexes succinate dehydrogenase (complex II, CII), ubiquinol-cytochrome c oxidoreductase (cytochrome b-c1 complex, complex III, CIII) and cytochrome c oxidase (complex IV, CIV), that cooperate to transfer electrons derived from NADH and succinate to molecular oxygen, creating an electrochemical gradient over the inner membrane that drives transmembrane transport and the ATP synthase. Cytochrome c oxidase is the component of the respiratory chain that catalyzes the reduction of oxygen to water. Electrons originating from reduced cytochrome c in the intermembrane space (IMS) are transferred via the dinuclear copper A center (CU(A)) of subunit 2 and heme A of subunit 1 to the active site in subunit 1, a binuclear center (BNC) formed by heme A3 and copper B (CU(B)). The BNC reduces molecular oxygen to 2 water molecules using 4 electrons from cytochrome c in the IMS and 4 protons from the mitochondrial matrix. The chain is Cytochrome c oxidase subunit 3 (MT-CO3) from Pelomedusa subrufa (African side-necked turtle).